The chain runs to 137 residues: Large ribosomal subunit protein uL16 (137 aa).

The protein belongs to the universal ribosomal protein uL16 family. Part of the 50S ribosomal subunit.

Its function is as follows. Binds 23S rRNA and is also seen to make contacts with the A and possibly P site tRNAs. The polypeptide is Large ribosomal subunit protein uL16 (Rhizobium meliloti (strain 1021) (Ensifer meliloti)).